We begin with the raw amino-acid sequence, 439 residues long: 3-phosphoshikimate 1-carboxyvinyltransferase (439 aa).

Positions 29 and 34 each coordinate 3-phosphoshikimate. Residue Lys29 participates in phosphoenolpyruvate binding. Residues Gly99 and Arg128 each contribute to the phosphoenolpyruvate site. Residues Ser171, Ser172, Gln173, Ser199, Asp316, and Lys343 each coordinate 3-phosphoshikimate. Residue Gln173 coordinates phosphoenolpyruvate. Asp316 serves as the catalytic Proton acceptor. The phosphoenolpyruvate site is built by Arg347, Arg390, and Lys416.

Belongs to the EPSP synthase family. In terms of assembly, monomer.

It is found in the cytoplasm. It carries out the reaction 3-phosphoshikimate + phosphoenolpyruvate = 5-O-(1-carboxyvinyl)-3-phosphoshikimate + phosphate. The protein operates within metabolic intermediate biosynthesis; chorismate biosynthesis; chorismate from D-erythrose 4-phosphate and phosphoenolpyruvate: step 6/7. Catalyzes the transfer of the enolpyruvyl moiety of phosphoenolpyruvate (PEP) to the 5-hydroxyl of shikimate-3-phosphate (S3P) to produce enolpyruvyl shikimate-3-phosphate and inorganic phosphate. In Deinococcus radiodurans (strain ATCC 13939 / DSM 20539 / JCM 16871 / CCUG 27074 / LMG 4051 / NBRC 15346 / NCIMB 9279 / VKM B-1422 / R1), this protein is 3-phosphoshikimate 1-carboxyvinyltransferase.